Reading from the N-terminus, the 769-residue chain is Integrin beta-2 (769 aa).

The signal sequence occupies residues 1–22; that stretch reads MLRQRPQLLLLAGLLALQSVLS. Glutamine 23 is subject to Pyrrolidone carboxylic acid. Residues 23-700 lie on the Extracellular side of the membrane; the sequence is QECTNYKVST…DMLECVKGPN (678 aa). A PSI domain is found at 24–74; sequence ECTNYKVSTCRDCIESGPGCAWCQKLNFTGQGEPDSIRCDTRAELLSKGCP. 28 disulfides stabilise this stretch: cysteine 25-cysteine 43, cysteine 33-cysteine 447, cysteine 36-cysteine 62, cysteine 46-cysteine 73, cysteine 191-cysteine 198, cysteine 246-cysteine 286, cysteine 386-cysteine 400, cysteine 420-cysteine 445, cysteine 449-cysteine 467, cysteine 459-cysteine 470, cysteine 472-cysteine 481, cysteine 483-cysteine 514, cysteine 497-cysteine 512, cysteine 506-cysteine 517, cysteine 519-cysteine 534, cysteine 536-cysteine 559, cysteine 541-cysteine 557, cysteine 549-cysteine 562, cysteine 564-cysteine 573, cysteine 575-cysteine 598, cysteine 582-cysteine 596, cysteine 590-cysteine 601, cysteine 603-cysteine 612, cysteine 615-cysteine 618, cysteine 622-cysteine 662, cysteine 628-cysteine 647, cysteine 631-cysteine 643, and cysteine 670-cysteine 695. Residues asparagine 50 and asparagine 116 are each glycosylated (N-linked (GlcNAc...) asparagine). Residues 124–363 form the VWFA domain; sequence GYPIDLYYLM…ELIKNAYNKL (240 aa). 2 residues coordinate Mg(2+): serine 136 and serine 138. Residues serine 138, aspartate 141, aspartate 142, and aspartate 173 each contribute to the Ca(2+) site. Residues asparagine 229, aspartate 231, proline 233, and glutamate 234 each contribute to the Ca(2+) site. Glutamate 234 serves as a coordination point for Mg(2+). Residue asparagine 254 is glycosylated (N-linked (GlcNAc...) asparagine). Ca(2+)-binding residues include aspartate 264 and glutamate 347. Residues 397–399 carry the Cell attachment site motif; it reads RGD. 4 I-EGF domains span residues 449–482, 483–535, 536–574, and 575–613; these read CRDA…KNCE, CQTQ…QFCE, CDNV…SACQ, and CLKS…PLCS. An N-linked (GlcNAc...) asparagine glycan is attached at asparagine 501. An N-linked (GlcNAc...) asparagine glycan is attached at asparagine 642. A helical transmembrane segment spans residues 701 to 723; it reads IAAIVGGTVGGVVLVGILLLVIW. The Cytoplasmic segment spans residues 724–769; that stretch reads KALTHLSDLREYHRFEKEKLKSQWNNDNPLFKSATTTVMNPKFAES. Residues serine 745 and serine 756 each carry the phosphoserine modification. A phosphothreonine mark is found at threonine 758 and threonine 760.

The protein belongs to the integrin beta chain family. As to quaternary structure, heterodimer of an alpha and a beta subunit. The ITGB2 beta subunit associates with the ITGAL, ITGAM, ITGAX or ITGAD alpha subunits. Found in a complex with CD177 and ITGAM/CD11b. Interacts with FGR. Interacts with COPS5 and RANBP9. Interacts with FLNA (via filamin repeats 4, 9, 12, 17, 19, 21, and 23). Interacts with THBD. Post-translationally, both Ser-745 and Ser-756 become phosphorylated when T-cells are exposed to phorbol esters. Phosphorylation on Thr-758 (but not on Ser-756) allows interaction with 14-3-3 proteins.

Its subcellular location is the cell membrane. The protein localises to the membrane raft. Its function is as follows. Integrin ITGAL/ITGB2 is a receptor for ICAM1, ICAM2, ICAM3 and ICAM4. Integrin ITGAL/ITGB2 is also a receptor for the secreted form of ubiquitin-like protein ISG15; the interaction is mediated by ITGAL. Integrins ITGAM/ITGB2 and ITGAX/ITGB2 are receptors for the iC3b fragment of the third complement component and for fibrinogen. Integrin ITGAX/ITGB2 recognizes the sequence G-P-R in fibrinogen alpha-chain. Integrin ITGAM/ITGB2 recognizes P1 and P2 peptides of fibrinogen gamma chain. Integrin ITGAM/ITGB2 is also a receptor for factor X. Integrin ITGAD/ITGB2 is a receptor for ICAM3 and VCAM1. Contributes to natural killer cell cytotoxicity. Involved in leukocyte adhesion and transmigration of leukocytes including T-cells and neutrophils. Triggers neutrophil transmigration during lung injury through PTK2B/PYK2-mediated activation. Integrin ITGAL/ITGB2 in association with ICAM3, contributes to apoptotic neutrophil phagocytosis by macrophages. This chain is Integrin beta-2 (ITGB2), found in Bos taurus (Bovine).